The sequence spans 170 residues: Peptide deformylase (170 aa).

Cys-91 and His-133 together coordinate Fe cation. Glu-134 is an active-site residue. His-137 contacts Fe cation.

This sequence belongs to the polypeptide deformylase family. It depends on Fe(2+) as a cofactor.

It catalyses the reaction N-terminal N-formyl-L-methionyl-[peptide] + H2O = N-terminal L-methionyl-[peptide] + formate. Functionally, removes the formyl group from the N-terminal Met of newly synthesized proteins. Requires at least a dipeptide for an efficient rate of reaction. N-terminal L-methionine is a prerequisite for activity but the enzyme has broad specificity at other positions. The chain is Peptide deformylase from Pectobacterium carotovorum subsp. carotovorum (strain PC1).